The sequence spans 435 residues: Methionine aminopeptidase 2-2 (435 aa).

Residues 1–92 (MAAQTTEKLQ…VPVSNLFPNN (92 aa)) are disordered. The segment covering 24-33 (DAPAAGQAEA) has biased composition (low complexity). Acidic residues predominate over residues 34–45 (GEAEEDSDDEKD). The span at 59–73 (AKKKKRKSKKKKKGG) shows a compositional bias: basic residues. His-197 lines the substrate pocket. A divalent metal cation-binding residues include Asp-217, Asp-228, and His-297. His-305 lines the substrate pocket. Positions 330 and 425 each coordinate a divalent metal cation.

Belongs to the peptidase M24A family. Methionine aminopeptidase eukaryotic type 2 subfamily. Co(2+) is required as a cofactor. The cofactor is Zn(2+). It depends on Mn(2+) as a cofactor. Fe(2+) serves as cofactor.

The protein localises to the cytoplasm. The enzyme catalyses Release of N-terminal amino acids, preferentially methionine, from peptides and arylamides.. In terms of biological role, cotranslationally removes the N-terminal methionine from nascent proteins. The N-terminal methionine is often cleaved when the second residue in the primary sequence is small and uncharged (Met-Ala-, Cys, Gly, Pro, Ser, Thr, or Val). The chain is Methionine aminopeptidase 2-2 from Aspergillus clavatus (strain ATCC 1007 / CBS 513.65 / DSM 816 / NCTC 3887 / NRRL 1 / QM 1276 / 107).